A 488-amino-acid polypeptide reads, in one-letter code: GTPase Der (488 aa).

EngA-type G domains lie at Pro3–Gly166 and Ile201–Thr374. Residues Gly9 to Ser16, Asp56 to Ile60, Asn118 to Asp121, Gly207 to Ser214, Asp254 to Val258, and Asn319 to Asp322 each bind GTP. Positions Lys375 to Ala459 constitute a KH-like domain.

This sequence belongs to the TRAFAC class TrmE-Era-EngA-EngB-Septin-like GTPase superfamily. EngA (Der) GTPase family. In terms of assembly, associates with the 50S ribosomal subunit.

Functionally, GTPase that plays an essential role in the late steps of ribosome biogenesis. The protein is GTPase Der of Sodalis glossinidius (strain morsitans).